A 780-amino-acid chain; its full sequence is Semaphorin-3G (780 aa).

An N-terminal signal peptide occupies residues 1 to 22; sequence MDPSAWAICCLLGSLLFHVGIP. The Sema domain occupies 32-519; that stretch reads RLRLSYRDLL…SPLGVARLQL (488 aa). Asparagine 44 carries an N-linked (GlcNAc...) asparagine glycan. The cysteines at positions 105 and 116 are disulfide-linked. A glycan (N-linked (GlcNAc...) asparagine) is linked at asparagine 127. Disulfide bonds link cysteine 134-cysteine 143, cysteine 270-cysteine 382, cysteine 294-cysteine 342, cysteine 522-cysteine 540, and cysteine 603-cysteine 655. One can recognise an Ig-like C2-type domain in the interval 569 to 671; that stretch reads PAVQCLGQGQ…FSQTVVRFAL (103 aa). A glycan (N-linked (GlcNAc...) asparagine) is linked at asparagine 652.

This sequence belongs to the semaphorin family. As to expression, highly expressed in lung and kidney. Weakly expressed in brain.

Its subcellular location is the secreted. Has chemorepulsive activities for sympathetic axons. Ligand of NRP2. The protein is Semaphorin-3G (Sema3g) of Mus musculus (Mouse).